The sequence spans 130 residues: Small ribosomal subunit protein uS11 (130 aa).

It belongs to the universal ribosomal protein uS11 family. As to quaternary structure, part of the 30S ribosomal subunit. Interacts with proteins S7 and S18. Binds to IF-3.

Functionally, located on the platform of the 30S subunit, it bridges several disparate RNA helices of the 16S rRNA. Forms part of the Shine-Dalgarno cleft in the 70S ribosome. This Latilactobacillus sakei subsp. sakei (strain 23K) (Lactobacillus sakei subsp. sakei) protein is Small ribosomal subunit protein uS11.